Here is a 255-residue protein sequence, read N- to C-terminus: MFKIGNLELQSRLLLGTGKFENEEVQSKAIEASETNVLTFAVRRMNLYDRNLPNPLANVNLKDFITFPNTAGAKTAQEAIRIAEIANHAGVCDMIKVEVIGDDETLLPDPFETYEACKVLLEKGYTVCPYISNDLVLAQRLEELGVHAVMPLASPIGTGRGINNPLNLSYIIENASVPVIVDAGIGSPKDACHAMELGADGILLNTAISAAKDPVKMAEAMKLGINAGRLSYEAGRIPVKYTAQASSPSEGLGFL.

The active-site Schiff-base intermediate with DXP is Lys96. 1-deoxy-D-xylulose 5-phosphate-binding positions include Gly157, Ala183–Gly184, and Asn205–Thr206.

It belongs to the ThiG family. Homotetramer. Forms heterodimers with either ThiH or ThiS.

The protein localises to the cytoplasm. The enzyme catalyses [ThiS sulfur-carrier protein]-C-terminal-Gly-aminoethanethioate + 2-iminoacetate + 1-deoxy-D-xylulose 5-phosphate = [ThiS sulfur-carrier protein]-C-terminal Gly-Gly + 2-[(2R,5Z)-2-carboxy-4-methylthiazol-5(2H)-ylidene]ethyl phosphate + 2 H2O + H(+). The protein operates within cofactor biosynthesis; thiamine diphosphate biosynthesis. In terms of biological role, catalyzes the rearrangement of 1-deoxy-D-xylulose 5-phosphate (DXP) to produce the thiazole phosphate moiety of thiamine. Sulfur is provided by the thiocarboxylate moiety of the carrier protein ThiS. In vitro, sulfur can be provided by H(2)S. In Staphylococcus epidermidis (strain ATCC 12228 / FDA PCI 1200), this protein is Thiazole synthase.